We begin with the raw amino-acid sequence, 322 residues long: DNA repair and recombination protein RadA (322 aa).

ATP is bound at residue 105–112 (GMYGSGKT).

Belongs to the eukaryotic RecA-like protein family.

In terms of biological role, involved in DNA repair and in homologous recombination. Binds and assemble on single-stranded DNA to form a nucleoprotein filament. Hydrolyzes ATP in a ssDNA-dependent manner and promotes DNA strand exchange between homologous DNA molecules. This is DNA repair and recombination protein RadA from Methanococcus maripaludis (strain C6 / ATCC BAA-1332).